Here is a 141-residue protein sequence, read N- to C-terminus: Nucleoside diphosphate kinase (141 aa).

ATP is bound by residues lysine 11, phenylalanine 59, arginine 87, threonine 93, arginine 104, and asparagine 114. Histidine 117 functions as the Pros-phosphohistidine intermediate in the catalytic mechanism.

The protein belongs to the NDK family. As to quaternary structure, homotetramer. Mg(2+) is required as a cofactor.

It localises to the cytoplasm. The catalysed reaction is a 2'-deoxyribonucleoside 5'-diphosphate + ATP = a 2'-deoxyribonucleoside 5'-triphosphate + ADP. It catalyses the reaction a ribonucleoside 5'-diphosphate + ATP = a ribonucleoside 5'-triphosphate + ADP. Functionally, major role in the synthesis of nucleoside triphosphates other than ATP. The ATP gamma phosphate is transferred to the NDP beta phosphate via a ping-pong mechanism, using a phosphorylated active-site intermediate. This chain is Nucleoside diphosphate kinase, found in Yersinia enterocolitica serotype O:8 / biotype 1B (strain NCTC 13174 / 8081).